Here is a 333-residue protein sequence, read N- to C-terminus: Ferrochelatase (333 aa).

Fe cation is bound by residues His-202 and Glu-284.

It belongs to the ferrochelatase family.

The protein resides in the cytoplasm. The catalysed reaction is heme b + 2 H(+) = protoporphyrin IX + Fe(2+). The protein operates within porphyrin-containing compound metabolism; protoheme biosynthesis; protoheme from protoporphyrin-IX: step 1/1. Functionally, catalyzes the ferrous insertion into protoporphyrin IX. The protein is Ferrochelatase of Francisella tularensis subsp. mediasiatica (strain FSC147).